Reading from the N-terminus, the 364-residue chain is DNA replication and repair protein RecF (364 aa).

G30–T37 is a binding site for ATP.

The protein belongs to the RecF family.

It localises to the cytoplasm. In terms of biological role, the RecF protein is involved in DNA metabolism; it is required for DNA replication and normal SOS inducibility. RecF binds preferentially to single-stranded, linear DNA. It also seems to bind ATP. The sequence is that of DNA replication and repair protein RecF from Stenotrophomonas maltophilia (strain R551-3).